The sequence spans 2065 residues: WD repeat-containing protein 81 (2065 aa).

Positions Leu325–Val617 constitute a BEACH domain. Disordered stretches follow at residues Glu1082 to Gly1111, Thr1156 to Arg1230, Gly1271 to Glu1290, and Ala1595 to Ile1642. Positions Lys1101–Gly1111 are enriched in gly residues. Positions Thr1156–Asn1169 are enriched in polar residues. Acidic residues predominate over residues Asp1213–Glu1228. Over residues Ser1624–Pro1637 the composition is skewed to low complexity. 5 WD repeats span residues Gly1767–Arg1806, Thr1813–Cys1853, Leu1906–Gly1945, Gly1948–Gln1986, and Asn2035–Ala2065.

Belongs to the WD repeat WDR81 family. As to expression, widely expressed.

Its subcellular location is the early endosome membrane. The protein localises to the late endosome membrane. The protein resides in the lysosome membrane. It localises to the cytoplasmic vesicle. It is found in the autophagosome membrane. Its subcellular location is the mitochondrion. The protein localises to the cytoplasm. The protein resides in the cytosol. Functions as a negative regulator of the PI3 kinase/PI3K activity associated with endosomal membranes. By modifying the phosphatidylinositol 3-phosphate/PtdInsP3 content of endosomal membranes may regulate endosome fusion, recycling, sorting and early to late endosome transport. May also play a role in aggrephagy, the macroautophagic degradation of ubiquitinated protein aggregates. May also be involved in maintenance of normal mitochondrial structure and organization. The chain is WD repeat-containing protein 81 (wdr81) from Danio rerio (Zebrafish).